We begin with the raw amino-acid sequence, 174 residues long: ATP synthase subunit delta (174 aa).

It belongs to the ATPase delta chain family. In terms of assembly, F-type ATPases have 2 components, F(1) - the catalytic core - and F(0) - the membrane proton channel. F(1) has five subunits: alpha(3), beta(3), gamma(1), delta(1), epsilon(1). F(0) has three main subunits: a(1), b(2) and c(10-14). The alpha and beta chains form an alternating ring which encloses part of the gamma chain. F(1) is attached to F(0) by a central stalk formed by the gamma and epsilon chains, while a peripheral stalk is formed by the delta and b chains.

It is found in the cell inner membrane. In terms of biological role, f(1)F(0) ATP synthase produces ATP from ADP in the presence of a proton or sodium gradient. F-type ATPases consist of two structural domains, F(1) containing the extramembraneous catalytic core and F(0) containing the membrane proton channel, linked together by a central stalk and a peripheral stalk. During catalysis, ATP synthesis in the catalytic domain of F(1) is coupled via a rotary mechanism of the central stalk subunits to proton translocation. Its function is as follows. This protein is part of the stalk that links CF(0) to CF(1). It either transmits conformational changes from CF(0) to CF(1) or is implicated in proton conduction. The polypeptide is ATP synthase subunit delta (Francisella tularensis subsp. tularensis (strain FSC 198)).